The chain runs to 345 residues: uncharacterized protein (345 aa).

It localises to the plastid. It is found in the chloroplast. This is an uncharacterized protein from Chlamydomonas moewusii (Chlamydomonas eugametos).